Reading from the N-terminus, the 379-residue chain is UDP-4-amino-4-deoxy-L-arabinose--oxoglutarate aminotransferase (379 aa).

Residue Lys182 is modified to N6-(pyridoxal phosphate)lysine.

This sequence belongs to the DegT/DnrJ/EryC1 family. ArnB subfamily. Homodimer. It depends on pyridoxal 5'-phosphate as a cofactor.

The catalysed reaction is UDP-4-amino-4-deoxy-beta-L-arabinose + 2-oxoglutarate = UDP-beta-L-threo-pentopyranos-4-ulose + L-glutamate. It participates in nucleotide-sugar biosynthesis; UDP-4-deoxy-4-formamido-beta-L-arabinose biosynthesis; UDP-4-deoxy-4-formamido-beta-L-arabinose from UDP-alpha-D-glucuronate: step 2/3. The protein operates within bacterial outer membrane biogenesis; lipopolysaccharide biosynthesis. Its function is as follows. Catalyzes the conversion of UDP-4-keto-arabinose (UDP-Ara4O) to UDP-4-amino-4-deoxy-L-arabinose (UDP-L-Ara4N). The modified arabinose is attached to lipid A and is required for resistance to polymyxin and cationic antimicrobial peptides. The polypeptide is UDP-4-amino-4-deoxy-L-arabinose--oxoglutarate aminotransferase (Salmonella paratyphi A (strain ATCC 9150 / SARB42)).